The following is a 395-amino-acid chain: Guanine nucleotide-binding protein subunit beta-5b (395 aa).

WD repeat units lie at residues 103–142, 145–184, 193–234, 235–276, 279–318, 320–362, and 365–395; these read GHGN…KEHA, MPCT…NENL, MHTN…QSFH, GHSA…NVQS, THDS…EVAI, SKDS…RVAI, and GHEN…RIWA.

This sequence belongs to the WD repeat G protein beta family. In terms of assembly, may interact with RGS9; this interaction stabilizes both proteins and increases RGS9 GTPase-activating protein (GAP) activity, hence accelerating the deactivation of D(2) dopamine receptor-mediated signaling.

It localises to the membrane. Its function is as follows. Enhances GTPase-activating protein (GAP) activity of regulator of G protein signaling (RGS) proteins, such as RGS7 and RGS9, hence involved in the termination of the signaling initiated by the G protein coupled receptors (GPCRs) by accelerating the GTP hydrolysis on the G-alpha subunits, thereby promoting their inactivation. Increases RGS7 GTPase-activating protein (GAP) activity, thereby regulating mood and cognition. Increases RGS9 GTPase-activating protein (GAP) activity, hence contributes to the deactivation of G protein signaling initiated by D(2) dopamine receptors. Along with gnb5a, plays an important role in neuronal signaling, including in the parasympathetic, but not sympathetic, control of heart rate. This chain is Guanine nucleotide-binding protein subunit beta-5b, found in Danio rerio (Zebrafish).